A 49-amino-acid chain; its full sequence is Large ribosomal subunit protein bL33 (49 aa).

Belongs to the bacterial ribosomal protein bL33 family.

In Leuconostoc citreum (strain KM20), this protein is Large ribosomal subunit protein bL33.